We begin with the raw amino-acid sequence, 510 residues long: ATP synthase subunit alpha (510 aa).

170–177 is an ATP binding site; it reads GDRQTGKT.

The protein belongs to the ATPase alpha/beta chains family. F-type ATPases have 2 components, CF(1) - the catalytic core - and CF(0) - the membrane proton channel. CF(1) has five subunits: alpha(3), beta(3), gamma(1), delta(1), epsilon(1). CF(0) has three main subunits: a(1), b(2) and c(9-12). The alpha and beta chains form an alternating ring which encloses part of the gamma chain. CF(1) is attached to CF(0) by a central stalk formed by the gamma and epsilon chains, while a peripheral stalk is formed by the delta and b chains.

It localises to the cell inner membrane. The enzyme catalyses ATP + H2O + 4 H(+)(in) = ADP + phosphate + 5 H(+)(out). Its function is as follows. Produces ATP from ADP in the presence of a proton gradient across the membrane. The alpha chain is a regulatory subunit. This chain is ATP synthase subunit alpha, found in Caulobacter vibrioides (strain ATCC 19089 / CIP 103742 / CB 15) (Caulobacter crescentus).